Here is a 304-residue protein sequence, read N- to C-terminus: UDP-N-acetylenolpyruvoylglucosamine reductase (304 aa).

Residues 34–198 form the FAD-binding PCMH-type domain; that stretch reads IGGKADFLVW…LEVVFALRPG (165 aa). R177 is an active-site residue. S227 (proton donor) is an active-site residue. E297 is a catalytic residue.

The protein belongs to the MurB family. Requires FAD as cofactor.

The protein localises to the cytoplasm. The catalysed reaction is UDP-N-acetyl-alpha-D-muramate + NADP(+) = UDP-N-acetyl-3-O-(1-carboxyvinyl)-alpha-D-glucosamine + NADPH + H(+). It participates in cell wall biogenesis; peptidoglycan biosynthesis. Its function is as follows. Cell wall formation. This Geobacillus kaustophilus (strain HTA426) protein is UDP-N-acetylenolpyruvoylglucosamine reductase.